The following is a 29-amino-acid chain: uncharacterized protein (29 aa).

Residues M1–G29 are disordered.

This is an uncharacterized protein from Saccharomyces cerevisiae (strain ATCC 204508 / S288c) (Baker's yeast).